Reading from the N-terminus, the 328-residue chain is Mitochondrial thiamine pyrophosphate carrier 1 (328 aa).

Solcar repeat units lie at residues 12–110, 120–208, and 221–316; these read GTRR…TTQL, PQPI…LRPV, and PPGS…ALKL. A run of 6 helical transmembrane segments spans residues 17 to 37, 79 to 99, 126 to 146, 185 to 205, 227 to 247, and 291 to 308; these read VVLA…PLDV, LTGL…YGGI, FISG…LDLL, SAAV…YEAL, AAAG…LDLV, and GLTV…VTMW.

The protein belongs to the mitochondrial carrier (TC 2.A.29) family.

The protein resides in the mitochondrion inner membrane. Functionally, mitochondrial transporter that mediates uptake of thiamine pyrophosphate (ThPP) into mitochondria. The sequence is that of Mitochondrial thiamine pyrophosphate carrier 1 (tpc1) from Emericella nidulans (strain FGSC A4 / ATCC 38163 / CBS 112.46 / NRRL 194 / M139) (Aspergillus nidulans).